Consider the following 331-residue polypeptide: Large ribosomal subunit protein uL3 (331 aa).

This sequence belongs to the universal ribosomal protein uL3 family. In terms of assembly, part of the 50S ribosomal subunit. Forms a cluster with proteins L14 and L24e.

In terms of biological role, one of the primary rRNA binding proteins, it binds directly near the 3'-end of the 23S rRNA, where it nucleates assembly of the 50S subunit. This Thermoplasma acidophilum (strain ATCC 25905 / DSM 1728 / JCM 9062 / NBRC 15155 / AMRC-C165) protein is Large ribosomal subunit protein uL3.